The following is a 1195-amino-acid chain: Probable beta-tubulin polyglutamylase (1195 aa).

The tract at residues 1 to 110 (MSQKDIYNKY…QTEMTDNQNE (110 aa)) is disordered. Acidic residues-rich tracts occupy residues 17–27 (DQQEEDDDENQ) and 44–79 (QGED…EENN). Coiled coils occupy residues 59–103 (DEEQ…QQTE) and 144–260 (QDMD…QSEQ). Over residues 80–89 (QDQQNNSESN) the composition is skewed to low complexity. The segment covering 90 to 110 (LQYDKTNQKNQQTEMTDNQNE) has biased composition (polar residues). Residues 281–343 (PKNDVDQYTG…NKKEQAKKQQ (63 aa)) form a disordered region. Residues 294–316 (DSGESDEEANNEDDDEDEDDESE) show a composition bias toward acidic residues. A compositionally biased stretch (basic residues) spans 322 to 334 (RKNKAQLLKKKNN). The 354-residue stretch at 350 to 703 (KQTLVLNVAD…TCKAKNEIIN (354 aa)) folds into the TTL domain. ATP contacts are provided by residues 500–503 (QRYL), K513, and D515. A c-MTBD region region spans residues 674-756 (PLDSYIKKNT…GFERIFPMED (83 aa)). The segment at 783–862 (RNTKKVTEDP…ETIQCEDQEQ (80 aa)) is disordered. A compositionally biased stretch (polar residues) spans 825 to 849 (PNSQTTINKGIPGQNGQRPSSSQLN). The span at 850-860 (EEGETIQCEDQ) shows a compositional bias: acidic residues.

It is found in the cytoplasm. Its subcellular location is the cytoskeleton. The protein resides in the cell projection. The protein localises to the cilium. It localises to the cilium basal body. Its function is as follows. Probable tubulin polyglutamylase with a strong preference for beta-tubulin. In Tetrahymena thermophila (strain SB210), this protein is Probable beta-tubulin polyglutamylase (Ttll6a).